Reading from the N-terminus, the 156-residue chain is V-type proton ATPase 16 kDa proteolipid subunit c (156 aa).

Over 1 to 7 (MAENPIY) the chain is Lumenal. Residues 8–30 (GPFFGVMGAASAIIFSALGAAYG) traverse the membrane as a helical segment. The Cytoplasmic portion of the chain corresponds to 31–52 (TAKSGTGIAAMSVMRPELIMKS). Residues 53–73 (IIPVVMAGIIAIYGLVVAVLI) form a helical membrane-spanning segment. The Lumenal segment spans residues 74–92 (AGSLDSPSNNYTLYRGFIH). A helical membrane pass occupies residues 93-114 (LGAGLAVGFSGLAAGFAIGIVG). Residues 115–126 (DAGVRGTAQQPR) lie on the Cytoplasmic side of the membrane. The chain crosses the membrane as a helical span at residues 127 to 152 (LFVGMILILIFAEVLGLYGLIVAIYL). The Lumenal portion of the chain corresponds to 153 to 156 (YTKQ).

It belongs to the V-ATPase proteolipid subunit family. In terms of assembly, V-ATPase is a heteromultimeric enzyme made up of two complexes: the ATP-hydrolytic V1 complex and the proton translocation V0 complex. The V1 complex consists of three catalytic AB heterodimers that form a heterohexamer, three peripheral stalks each consisting of EG heterodimers, one central rotor including subunits D and F, and the regulatory subunits C and H. The proton translocation complex V0 consists of the proton transport subunit a, a ring of proteolipid subunits c9c'', rotary subunit d, subunits e and f, and the accessory subunits VhaAC45 and ATP6AP2.

The protein localises to the membrane. Proton-conducting pore forming subunit of the V0 complex of vacuolar(H+)-ATPase (V-ATPase), a multisubunit enzyme composed of a peripheral complex (V1) that hydrolyzes ATP and a membrane integral complex (V0) that translocates protons. V-ATPase is responsible for acidifying and maintaining the pH of intracellular compartments and in some cell types, is targeted to the plasma membrane, where it is responsible for acidifying the extracellular environment. The chain is V-type proton ATPase 16 kDa proteolipid subunit c (VHA16) from Manduca sexta (Tobacco hawkmoth).